A 307-amino-acid polypeptide reads, in one-letter code: Ribosomal RNA small subunit methyltransferase H (307 aa).

S-adenosyl-L-methionine-binding positions include 32–34, aspartate 52, phenylalanine 78, aspartate 99, and glutamine 106; that span reads GGH. Residues 287 to 307 form a disordered region; sequence KEEIESNKRSHSAKLRVAEKV.

This sequence belongs to the methyltransferase superfamily. RsmH family.

The protein resides in the cytoplasm. It catalyses the reaction cytidine(1402) in 16S rRNA + S-adenosyl-L-methionine = N(4)-methylcytidine(1402) in 16S rRNA + S-adenosyl-L-homocysteine + H(+). Functionally, specifically methylates the N4 position of cytidine in position 1402 (C1402) of 16S rRNA. This is Ribosomal RNA small subunit methyltransferase H from Caldicellulosiruptor bescii (strain ATCC BAA-1888 / DSM 6725 / KCTC 15123 / Z-1320) (Anaerocellum thermophilum).